The following is a 312-amino-acid chain: Methionyl-tRNA formyltransferase (312 aa).

110 to 113 (SLLP) is a binding site for (6S)-5,6,7,8-tetrahydrofolate.

The protein belongs to the Fmt family.

The catalysed reaction is L-methionyl-tRNA(fMet) + (6R)-10-formyltetrahydrofolate = N-formyl-L-methionyl-tRNA(fMet) + (6S)-5,6,7,8-tetrahydrofolate + H(+). In terms of biological role, attaches a formyl group to the free amino group of methionyl-tRNA(fMet). The formyl group appears to play a dual role in the initiator identity of N-formylmethionyl-tRNA by promoting its recognition by IF2 and preventing the misappropriation of this tRNA by the elongation apparatus. This chain is Methionyl-tRNA formyltransferase, found in Streptococcus suis (strain 05ZYH33).